Consider the following 371-residue polypeptide: 43 kDa relaxation protein (371 aa).

Disordered regions lie at residues 1–46 (MASY…GNMP), 150–172 (KEPD…AKNT), 196–221 (RVDS…GQVQ), 263–291 (SERD…FDFE), and 328–371 (IHQE…SFSR). Residues 22 to 42 (YIAREGKYAREKDSDLEHKES) show a composition bias toward basic and acidic residues. Over residues 157–168 (QKRHVSGKHRPN) the composition is skewed to basic residues. Residues 196–215 (RVDSRSLKAQGIDREPERHL) are compositionally biased toward basic and acidic residues. Positions 330-365 (QEMERQRERERLAEKQRQQEKERQRLAEQIRQKPDK) are enriched in basic and acidic residues.

Belongs to the MobA/MobL family.

Functionally, this protein is probably required for relaxation complex formation. This chain is 43 kDa relaxation protein, found in Salmonella typhimurium.